A 266-amino-acid chain; its full sequence is Undecaprenyl-diphosphatase (266 aa).

The next 7 membrane-spanning stretches (helical) occupy residues 41–61 (NLAF…VILW), 82–102 (YVIN…FFKD), 106–126 (AIFG…AALL), 140–160 (ISMK…LPGL), 180–200 (LAQF…LLDG), 213–233 (IPTL…CLAC), and 245–265 (LIYF…VSQL).

It belongs to the UppP family.

The protein resides in the cell inner membrane. It catalyses the reaction di-trans,octa-cis-undecaprenyl diphosphate + H2O = di-trans,octa-cis-undecaprenyl phosphate + phosphate + H(+). Its function is as follows. Catalyzes the dephosphorylation of undecaprenyl diphosphate (UPP). Confers resistance to bacitracin. The chain is Undecaprenyl-diphosphatase from Bacteroides fragilis (strain ATCC 25285 / DSM 2151 / CCUG 4856 / JCM 11019 / LMG 10263 / NCTC 9343 / Onslow / VPI 2553 / EN-2).